Here is a 142-residue protein sequence, read N- to C-terminus: Snaclec 2 (142 aa).

The first 23 residues, 1 to 23 (MGRFIFVSFSLLVVFLSLSGTGA), serve as a signal peptide directing secretion. C25 and C36 form a disulfide bridge. The region spanning 32-139 (YEGHCYRVFQ…CSETHNVICK (108 aa)) is the C-type lectin domain. A glycan (N-linked (GlcNAc...) asparagine) is linked at N43. 2 disulfides stabilise this stretch: C53–C138 and C115–C130.

It belongs to the snaclec family. As to quaternary structure, heterodimer; disulfide-linked. In terms of tissue distribution, expressed by the venom gland.

The protein localises to the secreted. In terms of biological role, interferes with one step of hemostasis (modulation of platelet aggregation, or coagulation cascade, for example). In Sistrurus catenatus edwardsii (Desert massasauga), this protein is Snaclec 2.